The sequence spans 187 residues: GTP cyclohydrolase 1 (187 aa).

Zn(2+) is bound by residues Cys76, His79, and Cys148.

The protein belongs to the GTP cyclohydrolase I family. In terms of assembly, toroid-shaped homodecamer, composed of two pentamers of five dimers.

It carries out the reaction GTP + H2O = 7,8-dihydroneopterin 3'-triphosphate + formate + H(+). Its pathway is cofactor biosynthesis; 7,8-dihydroneopterin triphosphate biosynthesis; 7,8-dihydroneopterin triphosphate from GTP: step 1/1. In Acetivibrio thermocellus (strain ATCC 27405 / DSM 1237 / JCM 9322 / NBRC 103400 / NCIMB 10682 / NRRL B-4536 / VPI 7372) (Clostridium thermocellum), this protein is GTP cyclohydrolase 1.